Reading from the N-terminus, the 627-residue chain is Membrane protein insertase YidC (627 aa).

6 helical membrane passes run K3–N23, W376–Y396, L450–I470, F502–I522, E534–F554, and A558–S578.

It belongs to the OXA1/ALB3/YidC family. Type 1 subfamily. Interacts with the Sec translocase complex via SecD. Specifically interacts with transmembrane segments of nascent integral membrane proteins during membrane integration.

The protein resides in the cell inner membrane. Functionally, required for the insertion and/or proper folding and/or complex formation of integral membrane proteins into the membrane. Involved in integration of membrane proteins that insert both dependently and independently of the Sec translocase complex, as well as at least some lipoproteins. Aids folding of multispanning membrane proteins. The chain is Membrane protein insertase YidC from Porphyromonas gingivalis (strain ATCC BAA-308 / W83).